The primary structure comprises 104 residues: N(4)-acetylcytidine amidohydrolase (104 aa).

In terms of domain architecture, ASCH spans 6–101; it reads TFFERFEHDI…EQLYMIRFKV (96 aa). Catalysis depends on Lys-20, which acts as the Proton acceptor. Residue Thr-23 is the Nucleophile of the active site. Glu-73 functions as the Proton donor in the catalytic mechanism.

The protein belongs to the N(4)-acetylcytidine amidohydrolase family.

The enzyme catalyses N(4)-acetylcytidine + H2O = cytidine + acetate + H(+). The catalysed reaction is N(4)-acetyl-2'-deoxycytidine + H2O = 2'-deoxycytidine + acetate + H(+). It catalyses the reaction N(4)-acetylcytosine + H2O = cytosine + acetate + H(+). Its function is as follows. Catalyzes the hydrolysis of N(4)-acetylcytidine (ac4C). This Shewanella oneidensis (strain ATCC 700550 / JCM 31522 / CIP 106686 / LMG 19005 / NCIMB 14063 / MR-1) protein is N(4)-acetylcytidine amidohydrolase.